The following is a 559-amino-acid chain: Leucine-rich repeat protein soc-2 (559 aa).

Positions 1 to 17 (METSKEFEFRPAKETSR) are enriched in basic and acidic residues. Residues 1–55 (METSKEFEFRPAKETSRSKSPGGIVGRLSNFARNKARHSLSEKGSNSVGGSGGSG) form a disordered region. LRR repeat units follow at residues 74 to 95 (QDQR…IKEL), 97 to 118 (QLTE…IGQL), 120 to 141 (NLKK…LSSL), 143 to 164 (SLET…IYKI), 166 to 187 (SLET…IGNL), 189 to 210 (KLKM…IGKL), 212 to 233 (SLVV…IGEC), 235 to 257 (ALTQ…GKLT), 258 to 279 (NLVR…LESC), 281 to 302 (QLEE…LLTM), 305 to 326 (KIHT…GPQQ), 329 to 350 (PTVT…IFSK), 353 to 374 (RLTK…MGSW), 376 to 397 (SITE…IEKL), 399 to 420 (NLEI…IGNL), 422 to 443 (KLRE…IGFL), 445 to 466 (HLTK…IGNL), 468 to 489 (SLQD…IGHL), 491 to 513 (SLKS…LALC), and 515 to 536 (SLEI…ITAG).

It belongs to the SHOC2 family. As to quaternary structure, interacts with let-60.

Functionally, acts as a Ras effector and participates in MAPK pathway activation. Probably acts as a scaffolding protein in a protein phosphatase complex that specifically dephosphorylates Raf kinase and stimulates Raf activity at specialized signaling complexes upon Ras activation. Required for vulval development. Involved in fluid homeostasis. Plays a role in nicotinic acetylcholine receptor (nAChR)-mediated sensitivity to nicotine. This is Leucine-rich repeat protein soc-2 (soc-2) from Caenorhabditis briggsae.